We begin with the raw amino-acid sequence, 277 residues long: Diaminopimelate epimerase (277 aa).

Substrate contacts are provided by N13, Q46, and N66. The active-site Proton donor is the C75. Residues 76–77, N160, N193, and 211–212 contribute to the substrate site; these read GN and ER. The Proton acceptor role is filled by C220. 221–222 contacts substrate; sequence GS.

The protein belongs to the diaminopimelate epimerase family. As to quaternary structure, homodimer.

It is found in the cytoplasm. The enzyme catalyses (2S,6S)-2,6-diaminopimelate = meso-2,6-diaminopimelate. The protein operates within amino-acid biosynthesis; L-lysine biosynthesis via DAP pathway; DL-2,6-diaminopimelate from LL-2,6-diaminopimelate: step 1/1. Catalyzes the stereoinversion of LL-2,6-diaminopimelate (L,L-DAP) to meso-diaminopimelate (meso-DAP), a precursor of L-lysine and an essential component of the bacterial peptidoglycan. The polypeptide is Diaminopimelate epimerase (Legionella pneumophila subsp. pneumophila (strain Philadelphia 1 / ATCC 33152 / DSM 7513)).